The sequence spans 193 residues: MTTEFYATPAFPVSKALQWTPPEQLELTPTQADWLLYEGSLTERLKQIGQQFSVKLLGQQLLAPNTEEKQRLKGKDQAVIREVLLYCNEKPWVFARSLFSPSAENANTLNLQQLGNQSLGESLFARSDLYCGDIEVAKVALEHPVARLNQQWFGINQRLLSRRRIFSTGGEQLLVSEVFLQPSPLYSSPNNRS.

Substrate is bound by residues R81, L119, and E177.

This sequence belongs to the UbiC family.

The protein resides in the cytoplasm. It carries out the reaction chorismate = 4-hydroxybenzoate + pyruvate. It functions in the pathway cofactor biosynthesis; ubiquinone biosynthesis. Removes the pyruvyl group from chorismate, with concomitant aromatization of the ring, to provide 4-hydroxybenzoate (4HB) for the ubiquinone pathway. This is Probable chorismate pyruvate-lyase from Idiomarina loihiensis (strain ATCC BAA-735 / DSM 15497 / L2-TR).